The primary structure comprises 331 residues: DNA fragmentation factor subunit alpha (331 aa).

Position 1 is an N-acetylmethionine (methionine 1). Residues 17 to 96 form the CIDE-N domain; the sequence is PLKPCLLRRN…ALACNEKWIY (80 aa). The residue at position 243 (threonine 243) is a Phosphothreonine. The tract at residues 306-331 is disordered; that stretch reads LRNLSARRSPLPGEPQRPKRAKRDSS.

Heterodimer of DFFA and DFFB. Post-translationally, caspase-3 cleaves DFF45 at 2 sites to generate an active factor.

The protein localises to the cytoplasm. In terms of biological role, inhibitor of the caspase-activated DNase (DFF40). This Mus musculus (Mouse) protein is DNA fragmentation factor subunit alpha (Dffa).